The primary structure comprises 492 residues: Serine carboxypeptidase-like 31 (492 aa).

The first 30 residues, M1–C30, serve as a signal peptide directing secretion. Disulfide bonds link C105–C376, C270–C283, and C307–C344. The N-linked (GlcNAc...) asparagine glycan is linked to N156. S198 is a catalytic residue. N221 and N271 each carry an N-linked (GlcNAc...) asparagine glycan. N372 and N383 each carry an N-linked (GlcNAc...) asparagine glycan. Catalysis depends on residues D413 and H465.

It belongs to the peptidase S10 family. Expressed in roots, senescent leaves, stems, flowers and siliques.

The protein localises to the secreted. Its function is as follows. Probable carboxypeptidase. This Arabidopsis thaliana (Mouse-ear cress) protein is Serine carboxypeptidase-like 31 (SCPL31).